The primary structure comprises 328 residues: Protein MGF 300-4L (328 aa).

The protein belongs to the asfivirus MGF 300 family.

The chain is Protein MGF 300-4L from Ornithodoros (relapsing fever ticks).